The sequence spans 195 residues: Cysteine/O-acetylserine efflux protein (195 aa).

Residues 1–7 are Periplasmic-facing; that stretch reads MTPTLLS. The helical transmembrane segment at 8–28 threads the bilayer; it reads AFWTYTLITAMTPGPNNILAL. Residues 29-46 lie on the Cytoplasmic side of the membrane; that stretch reads SSATSHGFRQSTRVLAGM. A helical membrane pass occupies residues 47–67; that stretch reads SLGFLIVMLLCAGISFSLAVI. The Periplasmic portion of the chain corresponds to 68–69; sequence DP. The chain crosses the membrane as a helical span at residues 70–90; that stretch reads AAVHLLSWAGAAYIVWLAWKI. Residues 91 to 104 lie on the Cytoplasmic side of the membrane; it reads ATSPTKEDGLQAKP. Residues 105–125 form a helical membrane-spanning segment; sequence ISFWASFALQFVNVKIILYGV. Topologically, residues 126-141 are periplasmic; the sequence is TALSTFVLPQTQALSW. Residues 142–162 form a helical membrane-spanning segment; the sequence is VVGVSVLLAMIGTFGNVCWAL. Over 163 to 176 the chain is Cytoplasmic; sequence AGHLFQRLFRQYGR. Residues 177 to 194 traverse the membrane as a helical segment; it reads QLNIVLALLLVYCAVRIF. Residue Tyr-195 is a topological domain, periplasmic.

The protein belongs to the Rht family.

The protein resides in the cell inner membrane. It catalyses the reaction O-acetyl-L-serine(in) = O-acetyl-L-serine(out). The catalysed reaction is L-cysteine(in) = L-cysteine(out). Its function is as follows. Exporter of O-acetylserine (OAS) and cysteine. In Escherichia coli O9:H4 (strain HS), this protein is Cysteine/O-acetylserine efflux protein (eamB).